Consider the following 695-residue polypeptide: UvrABC system protein C (695 aa).

Basic and acidic residues predominate over residues 1–10 (MNHDPAETRD). Positions 1 to 44 (MNHDPAETRDTAAAPLADTESPSPVSPELTPHPAPAAQDIDTAT) are disordered. Positions 88–166 (TSPGVYRMLN…IKQLRPRFNV (79 aa)) constitute a GIY-YIG domain. One can recognise a UVR domain in the interval 276–311 (RAVKQELAVEMEKASNELEFETAALYRDRLAALSAI).

The protein belongs to the UvrC family. Interacts with UvrB in an incision complex.

It is found in the cytoplasm. Functionally, the UvrABC repair system catalyzes the recognition and processing of DNA lesions. UvrC both incises the 5' and 3' sides of the lesion. The N-terminal half is responsible for the 3' incision and the C-terminal half is responsible for the 5' incision. This is UvrABC system protein C from Rhodopseudomonas palustris (strain HaA2).